We begin with the raw amino-acid sequence, 152 residues long: Single-stranded DNA-binding protein, mitochondrial (152 aa).

A mitochondrion-targeting transit peptide spans 1 to 16 (MFRRPVLQVFRQFVRH). One can recognise an SSB domain in the interval 30-141 (LNRVQLLGRV…IIAGKKLVVH (112 aa)). A phosphoserine mark is found at S67 and S79. An N6-acetyllysine modification is found at K113. K122 carries the post-translational modification N6-succinyllysine.

Homotetramer. Interacts with MPG/AAG, through inhibition of its glycosylase activity it potentially prevents formation of DNA breaks in ssDNA, ensuring that base removal primarily occurs in dsDNA. Interacts with POLDIP2. Interacts with PRIMPOL. In terms of tissue distribution, expressed in all the layers of the retina (at protein level).

The protein localises to the mitochondrion. It is found in the mitochondrion matrix. It localises to the mitochondrion nucleoid. Functionally, binds preferentially and cooperatively to pyrimidine rich single-stranded DNA (ss-DNA). In vitro, required to maintain the copy number of mitochondrial DNA (mtDNA) and plays a crucial role during mtDNA replication by stimulating the activity of the replisome components POLG and TWNK at the replication fork. Promotes the activity of the gamma complex polymerase POLG, largely by organizing the template DNA and eliminating secondary structures to favor ss-DNA conformations that facilitate POLG activity. In addition it is able to promote the 5'-3' unwinding activity of the mtDNA helicase TWNK. May also function in mtDNA repair. The chain is Single-stranded DNA-binding protein, mitochondrial (Ssbp1) from Mus musculus (Mouse).